A 448-amino-acid chain; its full sequence is Tubulin beta-1 chain (448 aa).

Gln-11, Glu-69, Ser-138, Gly-142, Thr-143, Gly-144, Asn-204, and Asn-226 together coordinate GTP. Glu-69 provides a ligand contact to Mg(2+). Residues 428–448 (AGIGDDEEEDEEGVMGEEIDA) are disordered. Positions 430–448 (IGDDEEEDEEGVMGEEIDA) are enriched in acidic residues.

It belongs to the tubulin family. As to quaternary structure, dimer of alpha and beta chains. A typical microtubule is a hollow water-filled tube with an outer diameter of 25 nm and an inner diameter of 15 nM. Alpha-beta heterodimers associate head-to-tail to form protofilaments running lengthwise along the microtubule wall with the beta-tubulin subunit facing the microtubule plus end conferring a structural polarity. Microtubules usually have 13 protofilaments but different protofilament numbers can be found in some organisms and specialized cells. Mg(2+) serves as cofactor.

It localises to the cytoplasm. It is found in the cytoskeleton. Its function is as follows. Tubulin is the major constituent of microtubules, a cylinder consisting of laterally associated linear protofilaments composed of alpha- and beta-tubulin heterodimers. Microtubules grow by the addition of GTP-tubulin dimers to the microtubule end, where a stabilizing cap forms. Below the cap, tubulin dimers are in GDP-bound state, owing to GTPase activity of alpha-tubulin. The protein is Tubulin beta-1 chain (TUB-1) of Echinococcus multilocularis (Fox tapeworm).